A 931-amino-acid polypeptide reads, in one-letter code: Aftiphilin (931 aa).

The tract at residues 1-49 (MEPDIIRMYSSSPPPLDNGAEDDEEDEFGEFGGFSEVSPSGVGFVDFDT) is disordered. Residues 19 to 29 (GAEDDEEDEFG) are compositionally biased toward acidic residues. A WXXF motif 1 motif is present at residues 28–31 (FGEF). The segment covering 33–45 (GFSEVSPSGVGFV) has biased composition (low complexity). Residue serine 151 is modified to Phosphoserine. Residues 371–381 (SVKTSDVNEIG) show a composition bias toward polar residues. The segment at 371-454 (SVKTSDVNEI…PFVTSTQDSM (84 aa)) is disordered. Serine 395 carries the phosphoserine modification. The WXXF motif 2 motif lies at 433 to 436 (FGDF). The segment covering 439–454 (ANGTTPPFVTSTQDSM) has biased composition (polar residues). The short motif at 476 to 479 (FGEF) is the WXXF motif 3 element. Disordered regions lie at residues 494-561 (TESD…SSAG) and 599-636 (WQSQ…LQEP). Residues 516-530 (GGKDSKPDSKLKNGQ) are compositionally biased toward basic and acidic residues. Phosphothreonine is present on threonine 613. Over residues 618 to 631 (SVSSAASKGAVASG) the composition is skewed to low complexity. Positions 712 to 714 (YQW) match the CLTCL1/Clathrin-binding motif. The tract at residues 821 to 825 (LLNLD) is clathrin-binding.

In terms of assembly, self-associates. Interacts with GGA1 (via GAE domain). Interacts with GGA3 (via GAE domain), AP1G1 (via GAE domain) and AP1G2 (via GAE domain). Component of the aftiphilin/p200/gamma-synergin complex, at least composed of AFTPH/aftiphilin, HEATR5B/p200a and SYNRG/gamma-synergin, which plays a role in the AP1G1/AP-1-mediated protein trafficking from early to recycling endosomes. Within the complex interacts with HEATR5B/p200a and SYNRG/gamma-synergin; the interactions are direct. Interacts with AP1G1/AP-1; the interaction is required to recruit AFTPH/aftiphilin to the perinuclear region of the cell. Interacts with CLTCL1/Clathrin.

It localises to the cytoplasm. The protein localises to the perinuclear region. It is found in the cytoplasmic vesicle. Its subcellular location is the clathrin-coated vesicle. Component of clathrin-coated vesicles. Component of the aftiphilin/p200/gamma-synergin complex, which plays roles in AP1G1/AP-1-mediated protein trafficking including the trafficking of transferrin from early to recycling endosomes, and the membrane trafficking of furin and the lysosomal enzyme cathepsin D between the trans-Golgi network (TGN) and endosomes. The protein is Aftiphilin (Aftph) of Mus musculus (Mouse).